The following is a 470-amino-acid chain: Pre-mycofactocin glycosyltransferase (470 aa).

The chain crosses the membrane as a helical span at residues 315-335; it reads LVISGGALMAWILMSIGTGLG.

The protein belongs to the glycosyltransferase 2 family.

It localises to the cell membrane. Functionally, involved in the biosynthesis of the enzyme cofactor mycofactocin (MFT). Acts as a glycosyltransferase that catalyzes the oligoglycosylation of pre-mycofactocin (PMFT), adding up to nine beta-1,4-linked glucose residues. Is required for the in vivo ethanol assimilation in M.smegmatis. This chain is Pre-mycofactocin glycosyltransferase (mftF), found in Mycobacterium tuberculosis (strain CDC 1551 / Oshkosh).